The primary structure comprises 67 residues: Myrmicitoxin(1)-Pm6a (67 aa).

The N-terminal stretch at 1-25 (MRSLYLSFSLTIIFVLVIMHAEAKA) is a signal peptide. Positions 26–37 (ISEPNAIAEADP) are excised as a propeptide. A Valine amide modification is found at Val-66.

It belongs to the formicidae venom clade 3 family. Expressed by the venom gland.

It is found in the secreted. Functionally, toxin that causes a rapid and irreversible paralysis when intrathoracically injected into insects (blowflies). Does not cause spontaneous nocifensive behaviors by intraplantar injection in mice. Exhibits hemolytic and cytotoxic activities on HEK293 cells. The polypeptide is Myrmicitoxin(1)-Pm6a (Pogonomyrmex maricopa (Maricopa harvester ant)).